The sequence spans 488 residues: Glutamyl-tRNA(Gln) amidotransferase subunit A (488 aa).

Catalysis depends on charge relay system residues Lys-77 and Ser-152. Residue Ser-176 is the Acyl-ester intermediate of the active site.

It belongs to the amidase family. GatA subfamily. In terms of assembly, heterotrimer of A, B and C subunits.

The enzyme catalyses L-glutamyl-tRNA(Gln) + L-glutamine + ATP + H2O = L-glutaminyl-tRNA(Gln) + L-glutamate + ADP + phosphate + H(+). Allows the formation of correctly charged Gln-tRNA(Gln) through the transamidation of misacylated Glu-tRNA(Gln) in organisms which lack glutaminyl-tRNA synthetase. The reaction takes place in the presence of glutamine and ATP through an activated gamma-phospho-Glu-tRNA(Gln). In Streptococcus pyogenes serotype M2 (strain MGAS10270), this protein is Glutamyl-tRNA(Gln) amidotransferase subunit A.